A 302-amino-acid chain; its full sequence is Cyclin-dependent kinase 1-B (302 aa).

Positions 4–287 (YTKIEKIGEG…ARKAMLHPYF (284 aa)) constitute a Protein kinase domain. ATP-binding positions include 10–18 (IGEGTYGVV) and Lys33. Thr14 carries the phosphothreonine modification. Tyr15 carries the post-translational modification Phosphotyrosine; by wee1 and wee2. The Proton acceptor role is filled by Asp128. A Phosphothreonine; by cak modification is found at Thr161. Residue Ser277 is modified to Phosphoserine.

This sequence belongs to the protein kinase superfamily. CMGC Ser/Thr protein kinase family. CDC2/CDKX subfamily. Forms a stable but non-covalent complex with a regulatory subunit and with a cyclin. Interacts with spdya. Phosphorylation at Tyr-15 by wee1 and wee2 inhibits the protein kinase activity and acts negative regulator of entry into mitosis (G2 to M transition).

It is found in the nucleus. The catalysed reaction is L-seryl-[protein] + ATP = O-phospho-L-seryl-[protein] + ADP + H(+). The enzyme catalyses L-threonyl-[protein] + ATP = O-phospho-L-threonyl-[protein] + ADP + H(+). It carries out the reaction [DNA-directed RNA polymerase] + ATP = phospho-[DNA-directed RNA polymerase] + ADP + H(+). Its activity is regulated as follows. Phosphorylation at Thr-14 or Tyr-15 inactivates the enzyme, while phosphorylation at Thr-161 activates it. In terms of biological role, plays a key role in the control of the eukaryotic cell cycle by modulating the centrosome cycle as well as mitotic onset; promotes G2-M transition via association with multiple interphase cyclins. During G2 and early mitosis, CDC25A/B/C-mediated dephosphorylation activates CDK1/cyclin complexes which phosphorylate several substrates that trigger at least centrosome separation, Golgi dynamics, nuclear envelope breakdown and chromosome condensation. Once chromosomes are condensed and aligned at the metaphase plate, CDK1 activity is switched off by WEE1- and PKMYT1-mediated phosphorylation to allow sister chromatid separation, chromosome decondensation, reformation of the nuclear envelope and cytokinesis. Catalyzes lamin (LMNA, LMNB1 and LMNB2) phosphorylation at the onset of mitosis, promoting nuclear envelope breakdown. The polypeptide is Cyclin-dependent kinase 1-B (cdk1-b) (Xenopus laevis (African clawed frog)).